A 235-amino-acid polypeptide reads, in one-letter code: Carbohydrate deacetylase (235 aa).

Mg(2+) contacts are provided by His-61 and His-124.

The protein belongs to the YdjC deacetylase family. Mg(2+) serves as cofactor.

Its function is as follows. Probably catalyzes the deacetylation of acetylated carbohydrates an important step in the degradation of oligosaccharides. The sequence is that of Carbohydrate deacetylase from Bacillus cereus (strain B4264).